The following is a 391-amino-acid chain: CBS domain-containing protein CBSX5 (391 aa).

2 consecutive CBS domains span residues 16–81 (GKPP…DHDH) and 331–391 (MARK…ENDM).

The polypeptide is CBS domain-containing protein CBSX5 (CBSX5) (Arabidopsis thaliana (Mouse-ear cress)).